The following is a 303-amino-acid chain: DnaJ homolog subfamily C member 17 (303 aa).

Residues 11-76 enclose the J domain; that stretch reads DLYALLGIEE…AARAAYDKVR (66 aa). 2 stretches are compositionally biased toward basic and acidic residues: residues 78 to 106 and 150 to 166; these read ARKQAAERTQRLDEKRKKVKLDLEARERQ and IRQDREQRLRGRTENTE. Disordered regions lie at residues 78 to 124 and 150 to 170; these read ARKQ…TTTL and IRQDREQRLRGRTENTEGKGT. One can recognise an RRM domain in the interval 178-249; that stretch reads KCKKEDESQG…NPLKVSWLEG (72 aa). An N6-methyllysine modification is found at Lys264.

It is found in the cytoplasm. It localises to the nucleus. Its function is as follows. May negatively affect PAX8-induced thyroglobulin/TG transcription. The chain is DnaJ homolog subfamily C member 17 (Dnajc17) from Rattus norvegicus (Rat).